A 599-amino-acid chain; its full sequence is Dual specificity tyrosine-phosphorylation-regulated kinase 2 (599 aa).

Residues Met-1–Leu-55 are disordered. Ser-30 is subject to Phosphoserine. Thr-104 carries the phosphothreonine; by ATM modification. The short motif at Lys-187–Arg-189 is the Nuclear localization signal element. Residues Tyr-220–Leu-533 enclose the Protein kinase domain. Residues Ile-226–Val-234, Lys-249, and Phe-299–Leu-302 contribute to the ATP site. Asp-346 acts as the Proton acceptor in catalysis. Thr-379 bears the Phosphothreonine; by MAP3K10 mark. At Tyr-380 the chain carries Phosphotyrosine; by autocatalysis. Phosphoserine; by ATM is present on Ser-440. At Ser-447 the chain carries Phosphoserine; by MAP3K10.

This sequence belongs to the protein kinase superfamily. CMGC Ser/Thr protein kinase family. MNB/DYRK subfamily. In terms of assembly, component of an E3 ligase complex containing DYRK2, EDD/UBR5, DDB1 and DCAF1 (EDVP complex). Interacts directly with EDD/UBR5, DDB1 and DCAF1. Interacts with SIAH2 and MDM2. Interacts with MAP3K10 and NFATC1. May also interact with CCNL2. Mg(2+) serves as cofactor. The cofactor is Mn(2+). Post-translationally, autophosphorylates cotranslationally on the second tyrosine residue in the Tyr-X-Tyr motif in the activation loop, but once mature, does not have any protein tyrosine kinase activity. Phosphorylated at Thr-104 and Ser-440 by ATM in response to genotoxic stress. Under normal conditions, polyubiquitinated in the nucleus by MDM2, leading to its proteasomal degradation. Phosphorylation on Thr-104 and Ser-440 by ATM in response to genotoxic stress disrupts MDM2 binding and prevents MDM2-mediated ubiquitination and subsequent proteasomal degradation. Polyubiquitinated by SIAH2, leading to its proteasomal degradation. Polyubiquitinated by SIAH2 occurs under normal conditions, and is enhanced in response to hypoxia.

It localises to the cytoplasm. The protein resides in the nucleus. It carries out the reaction L-seryl-[protein] + ATP = O-phospho-L-seryl-[protein] + ADP + H(+). The catalysed reaction is L-threonyl-[protein] + ATP = O-phospho-L-threonyl-[protein] + ADP + H(+). The enzyme catalyses L-tyrosyl-[protein] + ATP = O-phospho-L-tyrosyl-[protein] + ADP + H(+). With respect to regulation, activated by autophosphorylation on the second tyrosine residue in the Tyr-X-Tyr motif in the activation loop. In terms of biological role, serine/threonine-protein kinase involved in the regulation of the mitotic cell cycle, cell proliferation, apoptosis, organization of the cytoskeleton and neurite outgrowth. Functions in part via its role in ubiquitin-dependent proteasomal protein degradation. Functions downstream of ATM and phosphorylates p53/TP53 at 'Ser-46', and thereby contributes to the induction of apoptosis in response to DNA damage. Phosphorylates NFATC1, and thereby inhibits its accumulation in the nucleus and its transcription factor activity. Phosphorylates EIF2B5 at 'Ser-544', enabling its subsequent phosphorylation and inhibition by GSK3B. Likewise, phosphorylation of NFATC1, CRMP2/DPYSL2 and CRMP4/DPYSL3 promotes their subsequent phosphorylation by GSK3B. May play a general role in the priming of GSK3 substrates. Inactivates GYS1 by phosphorylation at 'Ser-641', and potentially also a second phosphorylation site, thus regulating glycogen synthesis. Mediates EDVP E3 ligase complex formation and is required for the phosphorylation and subsequent degradation of KATNA1. Phosphorylates TERT at 'Ser-457', promoting TERT ubiquitination by the EDVP complex. Phosphorylates SIAH2, and thereby increases its ubiquitin ligase activity. Promotes the proteasomal degradation of MYC and JUN, and thereby regulates progress through the mitotic cell cycle and cell proliferation. Promotes proteasomal degradation of GLI2 and GLI3, and thereby plays a role in smoothened and sonic hedgehog signaling. Phosphorylates CRMP2/DPYSL2, CRMP4/DPYSL3, DCX, EIF2B5, EIF4EBP1, GLI2, GLI3, GYS1, JUN, MDM2, MYC, NFATC1, p53/TP53, TAU/MAPT and KATNA1. Can phosphorylate histone H1, histone H3 and histone H2B (in vitro). Can phosphorylate CARHSP1 (in vitro). Plays a role in cytoskeleton organization and neurite outgrowth via its phosphorylation of DCX. This is Dual specificity tyrosine-phosphorylation-regulated kinase 2 from Mus musculus (Mouse).